Reading from the N-terminus, the 415-residue chain is Gamma-glutamyl phosphate reductase (415 aa).

It belongs to the gamma-glutamyl phosphate reductase family.

It localises to the cytoplasm. The catalysed reaction is L-glutamate 5-semialdehyde + phosphate + NADP(+) = L-glutamyl 5-phosphate + NADPH + H(+). It functions in the pathway amino-acid biosynthesis; L-proline biosynthesis; L-glutamate 5-semialdehyde from L-glutamate: step 2/2. Catalyzes the NADPH-dependent reduction of L-glutamate 5-phosphate into L-glutamate 5-semialdehyde and phosphate. The product spontaneously undergoes cyclization to form 1-pyrroline-5-carboxylate. The protein is Gamma-glutamyl phosphate reductase of Thermotoga sp. (strain RQ2).